Here is a 328-residue protein sequence, read N- to C-terminus: UPF0421 protein SAV1889 (328 aa).

4 helical membrane passes run Ile-19–Ile-39, Leu-61–Gln-81, Val-108–Phe-128, and Thr-132–Pro-152.

The protein belongs to the UPF0421 family.

The protein resides in the cell membrane. The chain is UPF0421 protein SAV1889 from Staphylococcus aureus (strain Mu50 / ATCC 700699).